We begin with the raw amino-acid sequence, 269 residues long: Octanoyltransferase LipM (269 aa).

Residues 31–239 enclose the BPL/LPL catalytic domain; that stretch reads NHGAPVLRFY…GFSEGFEVNF (209 aa). The Acyl-thioester intermediate role is filled by Cys-141.

Belongs to the octanoyltransferase LipM family. Monomer.

The catalysed reaction is octanoyl-[ACP] + L-lysyl-[protein] = N(6)-octanoyl-L-lysyl-[protein] + holo-[ACP] + H(+). It participates in protein modification; protein lipoylation via endogenous pathway; protein N(6)-(lipoyl)lysine from octanoyl-[acyl-carrier-protein]. Functionally, catalyzes the transfer of endogenously produced octanoic acid from octanoyl-acyl-carrier-protein onto the lipoyl domain of GcvH, an intermediate carrier during protein lipoylation. This Carboxydothermus hydrogenoformans (strain ATCC BAA-161 / DSM 6008 / Z-2901) protein is Octanoyltransferase LipM.